The primary structure comprises 718 residues: Catalase-peroxidase (718 aa).

A cross-link (tryptophyl-tyrosyl-methioninium (Trp-Tyr) (with M-245)) is located at residues 98–219 (WHAAGTYRMG…LAATEMGLIY (122 aa)). The active-site Proton acceptor is histidine 99. The segment at residues 219-245 (YVNPEGPQASGDPRSAAPFIRATFGNM) is a cross-link (tryptophyl-tyrosyl-methioninium (Tyr-Met) (with W-98)). Histidine 260 contributes to the heme b binding site.

It belongs to the peroxidase family. Peroxidase/catalase subfamily. Homodimer or homotetramer. Requires heme b as cofactor. Formation of the three residue Trp-Tyr-Met cross-link is important for the catalase, but not the peroxidase activity of the enzyme.

The catalysed reaction is H2O2 + AH2 = A + 2 H2O. It carries out the reaction 2 H2O2 = O2 + 2 H2O. Its function is as follows. Bifunctional enzyme with both catalase and broad-spectrum peroxidase activity. This chain is Catalase-peroxidase, found in Acinetobacter baumannii (strain ACICU).